The sequence spans 336 residues: UPF0324 membrane protein BT_1919 (336 aa).

8 consecutive transmembrane segments (helical) span residues 2–19 (LHGV…FYIG), 23–45 (FVRS…YANS), 85–107 (IGLP…GIYL), 117–134 (IALL…AAIL), 147–169 (TAVS…PFLY), 210–232 (AIIV…TYLV), 253–275 (WFAI…AQLV), and 310–332 (FVLA…KYLT).

Belongs to the UPF0324 family.

It is found in the cell membrane. The chain is UPF0324 membrane protein BT_1919 from Bacteroides thetaiotaomicron (strain ATCC 29148 / DSM 2079 / JCM 5827 / CCUG 10774 / NCTC 10582 / VPI-5482 / E50).